A 493-amino-acid polypeptide reads, in one-letter code: ATP synthase subunit beta (493 aa).

Position 169-176 (169-176 (GGAGVGKT)) interacts with ATP.

This sequence belongs to the ATPase alpha/beta chains family. F-type ATPases have 2 components, CF(1) - the catalytic core - and CF(0) - the membrane proton channel. CF(1) has five subunits: alpha(3), beta(3), gamma(1), delta(1), epsilon(1). CF(0) has three main subunits: a(1), b(2) and c(9-12). The alpha and beta chains form an alternating ring which encloses part of the gamma chain. CF(1) is attached to CF(0) by a central stalk formed by the gamma and epsilon chains, while a peripheral stalk is formed by the delta and b chains.

The protein resides in the cell inner membrane. The catalysed reaction is ATP + H2O + 4 H(+)(in) = ADP + phosphate + 5 H(+)(out). In terms of biological role, produces ATP from ADP in the presence of a proton gradient across the membrane. The catalytic sites are hosted primarily by the beta subunits. This is ATP synthase subunit beta from Gluconacetobacter diazotrophicus (strain ATCC 49037 / DSM 5601 / CCUG 37298 / CIP 103539 / LMG 7603 / PAl5).